The primary structure comprises 184 residues: Photosystem I assembly protein Ycf4 (184 aa).

The next 2 membrane-spanning stretches (helical) occupy residues 22–42 (FCWACILLLGSLGFLLVGISS) and 64–84 (IVMSFYGIAGLFISSYLWSTI).

This sequence belongs to the Ycf4 family.

It localises to the plastid. The protein resides in the chloroplast thylakoid membrane. In terms of biological role, seems to be required for the assembly of the photosystem I complex. This chain is Photosystem I assembly protein Ycf4, found in Piper cenocladum (Ant piper).